A 140-amino-acid chain; its full sequence is Arsenate-mycothiol transferase ArsC1 (140 aa).

This sequence belongs to the low molecular weight phosphotyrosine protein phosphatase family.

It is found in the cytoplasm. It catalyses the reaction mycothiol + arsenate = arseno-mycothiol + H2O. Its function is as follows. Involved in defense against toxic arsenate. Involved in the mycothiol/myoredoxin redox pathway which uses a mycothioltransferase mechanism; facilitates adduct formation between arsenate and mycothiol. This is Arsenate-mycothiol transferase ArsC1 (arsC1) from Corynebacterium glutamicum (strain ATCC 13032 / K051).